The chain runs to 931 residues: Probable zinc protease PqqL (931 aa).

Zn(2+) is bound at residue histidine 80. The active-site Proton acceptor is glutamate 83. Zn(2+) is bound by residues histidine 84 and glutamate 160.

This sequence belongs to the peptidase M16 family. The cofactor is Zn(2+).

This is Probable zinc protease PqqL (pqqL) from Escherichia coli (strain K12).